We begin with the raw amino-acid sequence, 100 residues long: Putative sodium channel toxin Ts26 (100 aa).

The signal sequence occupies residues 1-22; the sequence is MVKSAMKIVILILFVLLIRVES. In terms of domain architecture, LCN-type CS-alpha/beta spans 24–92; that stretch reads RNGYPDISDG…VMDTTIEYCE (69 aa). 4 disulfides stabilise this stretch: Cys38–Cys64, Cys50–Cys69, Cys54–Cys71, and Cys65–Cys91.

The protein belongs to the long (4 C-C) scorpion toxin superfamily. Sodium channel inhibitor family. In terms of tissue distribution, expressed by the venom gland.

The protein resides in the secreted. Functionally, putative sodium channel toxin. The sequence is that of Putative sodium channel toxin Ts26 from Tityus serrulatus (Brazilian scorpion).